Reading from the N-terminus, the 222-residue chain is Thiamine-phosphate synthase (222 aa).

4-amino-2-methyl-5-(diphosphooxymethyl)pyrimidine contacts are provided by residues 40 to 44 (QLRDK) and N81. Residues D82 and D101 each contribute to the Mg(2+) site. S120 provides a ligand contact to 4-amino-2-methyl-5-(diphosphooxymethyl)pyrimidine. A 2-[(2R,5Z)-2-carboxy-4-methylthiazol-5(2H)-ylidene]ethyl phosphate-binding site is contributed by 146 to 148 (TPT). K149 provides a ligand contact to 4-amino-2-methyl-5-(diphosphooxymethyl)pyrimidine. Residue G178 coordinates 2-[(2R,5Z)-2-carboxy-4-methylthiazol-5(2H)-ylidene]ethyl phosphate.

It belongs to the thiamine-phosphate synthase family. Mg(2+) serves as cofactor.

The enzyme catalyses 2-[(2R,5Z)-2-carboxy-4-methylthiazol-5(2H)-ylidene]ethyl phosphate + 4-amino-2-methyl-5-(diphosphooxymethyl)pyrimidine + 2 H(+) = thiamine phosphate + CO2 + diphosphate. It carries out the reaction 2-(2-carboxy-4-methylthiazol-5-yl)ethyl phosphate + 4-amino-2-methyl-5-(diphosphooxymethyl)pyrimidine + 2 H(+) = thiamine phosphate + CO2 + diphosphate. It catalyses the reaction 4-methyl-5-(2-phosphooxyethyl)-thiazole + 4-amino-2-methyl-5-(diphosphooxymethyl)pyrimidine + H(+) = thiamine phosphate + diphosphate. The protein operates within cofactor biosynthesis; thiamine diphosphate biosynthesis; thiamine phosphate from 4-amino-2-methyl-5-diphosphomethylpyrimidine and 4-methyl-5-(2-phosphoethyl)-thiazole: step 1/1. Functionally, condenses 4-methyl-5-(beta-hydroxyethyl)thiazole monophosphate (THZ-P) and 2-methyl-4-amino-5-hydroxymethyl pyrimidine pyrophosphate (HMP-PP) to form thiamine monophosphate (TMP). The polypeptide is Thiamine-phosphate synthase (Mycobacterium tuberculosis (strain ATCC 25177 / H37Ra)).